The following is an 813-amino-acid chain: Putative ATPase, plasma membrane-like (813 aa).

Over 1 to 66 (MATGDSLEDI…KKKEHITLRF (66 aa)) the chain is Cytoplasmic. Residues 67-86 (FALMFKPLSWVIQAAAIMAM) traverse the membrane as a helical segment. At 87 to 94 (LFANGDGR) the chain is on the extracellular side. Residues 95–115 (QLFLGIVCLLIVNTIICYLKE) form a helical membrane-spanning segment. Residues 116 to 245 (DDAANVVAMA…GHFRKVVTEI (130 aa)) lie on the Cytoplasmic side of the membrane. A helical transmembrane segment spans residues 246-266 (ENLCVISIAIGISIEVIVMYW). The Extracellular portion of the chain corresponds to 267-275 (IQRRNFSDV). The chain crosses the membrane as a helical span at residues 276–293 (INNLLVLVIGGIPLAMPT). Topologically, residues 294–555 (VLYVIMVTGS…ASRAILQQMK (262 aa)) are cytoplasmic. Catalysis depends on Asp-331, which acts as the 4-aspartylphosphate intermediate. The Mg(2+) site is built by Asp-500 and Asp-504. The helical transmembrane segment at 556–577 (HYTIYAVSITIRVVFGFMFIAL) threads the bilayer. The Extracellular segment spans residues 578–582 (IWKFD). Residues 583-605 (FSPFMVLAIALLNEETTKAITMD) form a helical membrane-spanning segment. At 606–622 (NVTNPSPTPDSLKLKEI) the chain is on the cytoplasmic side. A helical transmembrane segment spans residues 623–643 (FATGVVYGSYMALITVVFFWA). Residues 644–664 (AYRTDIFPRTFHVRDLRGNEA) are Extracellular-facing. A helical membrane pass occupies residues 665–685 (EMMCALYLQVSIMSQALFFVI). The Cytoplasmic segment spans residues 686 to 697 (QSRSWFFVERPG). Residues 698 to 718 (ELLFLSFVTVQTIATTLAVYA) form a helical membrane-spanning segment. Over 719 to 726 (SWETARIE) the chain is Extracellular. A helical transmembrane segment spans residues 727 to 747 (GIGWSWAGVIWLYNIIFFFPL). Over 748–813 (DIMKFGIRYI…SQDLRGVGWV (66 aa)) the chain is Cytoplasmic. Position 776 is a phosphoserine (Ser-776).

This sequence belongs to the cation transport ATPase (P-type) (TC 3.A.3) family. Type IIIA subfamily.

Its subcellular location is the membrane. The chain is Putative ATPase, plasma membrane-like from Arabidopsis thaliana (Mouse-ear cress).